A 205-amino-acid chain; its full sequence is Small ribosomal subunit protein uS4 (205 aa).

Positions 103 to 173 (RRLQTIVMKK…LEKSKRAEAA (71 aa)) constitute an S4 RNA-binding domain. Residues 174–205 (AREAAAEAAEAEQAAAQAAAPTPAPAAAAPKQ) form a disordered region. Over residues 179–205 (AEAAEAEQAAAQAAAPTPAPAAAAPKQ) the composition is skewed to low complexity.

Belongs to the universal ribosomal protein uS4 family. In terms of assembly, part of the 30S ribosomal subunit. Contacts protein S5. The interaction surface between S4 and S5 is involved in control of translational fidelity.

One of the primary rRNA binding proteins, it binds directly to 16S rRNA where it nucleates assembly of the body of the 30S subunit. Functionally, with S5 and S12 plays an important role in translational accuracy. This Cenarchaeum symbiosum (strain A) protein is Small ribosomal subunit protein uS4.